The primary structure comprises 423 residues: Maltoporin 1 (423 aa).

The N-terminal stretch at 1–24 (MITLRKLPIALAVAAGVLSTQAMA) is a signal peptide.

It belongs to the porin LamB (TC 1.B.3) family. In terms of assembly, homotrimer formed of three 18-stranded antiparallel beta-barrels, containing three independent channels.

The protein resides in the cell outer membrane. It carries out the reaction beta-maltose(in) = beta-maltose(out). Its function is as follows. Involved in the transport of maltose and maltodextrins. The polypeptide is Maltoporin 1 (Yersinia pestis bv. Antiqua (strain Antiqua)).